Consider the following 1462-residue polypeptide: Serine/threonine-protein kinase HSL1 (1462 aa).

Disordered regions lie at residues 1-26 and 41-69; these read MSTV…SSSM and RLSQ…KLGR. The region spanning 65 to 330 is the Protein kinase domain; that stretch reads WKLGRTLGRG…IDAILTHPLL (266 aa). Residues 71–79 and Lys-94 contribute to the ATP site; that span reads LGRGSTGRV. Asp-201 serves as the catalytic Proton acceptor. Disordered stretches follow at residues 412-450, 471-540, 598-637, 992-1031, 1095-1230, and 1269-1321; these read SNSF…HTTV, SAKG…TSVN, ENSK…TWSL, EDEE…NYDF, KETL…QQTK, and NRAA…LQKE. 2 stretches are compositionally biased toward polar residues: residues 428-440 and 471-487; these read PRST…TVTD and SAKG…PNTP. Over residues 510–526 the composition is skewed to low complexity; the sequence is ASRSRNASSRSLKSNSS. Polar residues predominate over residues 527 to 540; sequence TGRNGNNASVTSVN. Residues 610 to 620 are compositionally biased toward pro residues; the sequence is QLPPPPPPPIE. The stretch at 636 to 715 forms a coiled coil; sequence SLARRERELA…KLQKHQSAHD (80 aa). A compositionally biased stretch (basic and acidic residues) spans 1095-1130; it reads KETLLKNHSSDEATIEVKEDNNEHDFNDKIKQHYDD. A compositionally biased stretch (acidic residues) spans 1131-1153; the sequence is NGDSEEDDEDEDEEEEDDDDDDD. Polar residues-rich tracts occupy residues 1165–1176, 1197–1218, and 1292–1302; these read HNYSLAEITSES, STGI…NNGD, and NISQPLSSPTK.

The protein belongs to the protein kinase superfamily. CAMK Ser/Thr protein kinase family. NIM1 subfamily. Post-translationally, phosphorylated throughout the cell cycle, except for the G1 phase.

Its subcellular location is the bud neck. It carries out the reaction L-seryl-[protein] + ATP = O-phospho-L-seryl-[protein] + ADP + H(+). The catalysed reaction is L-threonyl-[protein] + ATP = O-phospho-L-threonyl-[protein] + ADP + H(+). Protein kinase involved in determination of morphology during the cell cycle of both yeast-form and hyphal cells via regulation of SWE1 and CDC28. Regulates pseudohypha formation, but is not required for septin ring organization or septum formation. Plays an essential role in virulence in a mouse model. The chain is Serine/threonine-protein kinase HSL1 (HSL1) from Candida albicans (strain SC5314 / ATCC MYA-2876) (Yeast).